Reading from the N-terminus, the 60-residue chain is Homeobox protein CHOX-CAD2 (60 aa).

The homeobox DNA-binding region spans 1-60 (KEKYRVVYTDHQRLELEKEFHCNRYITIRRKSELAVNLGLSERQVKSWFQNRRAKERKII).

It belongs to the Caudal homeobox family.

Its subcellular location is the nucleus. The chain is Homeobox protein CHOX-CAD2 (CHOX-CAD2) from Gallus gallus (Chicken).